A 676-amino-acid chain; its full sequence is Mediator of RNA polymerase II transcription subunit 17 (676 aa).

Disordered regions lie at residues 27–68 (IGSK…QFSN) and 117–176 (IEND…TQDT). Over residues 29 to 40 (SKSTSPHSNSTS) the composition is skewed to low complexity. Basic and acidic residues-rich tracts occupy residues 47 to 56 (HNTENEEVDN) and 120 to 134 (DNGKQESKDDTKAED). The span at 135–145 (GIDTMDIDQND) shows a compositional bias: acidic residues. Residues 146-160 (NSEANTNDIGYNEWS) are compositionally biased toward polar residues.

Belongs to the Mediator complex subunit 17 family. In terms of assembly, component of the Mediator complex.

The protein resides in the nucleus. Its function is as follows. Component of the Mediator complex, a coactivator involved in the regulated transcription of nearly all RNA polymerase II-dependent genes. Mediator functions as a bridge to convey information from gene-specific regulatory proteins to the basal RNA polymerase II transcription machinery. Mediator is recruited to promoters by direct interactions with regulatory proteins and serves as a scaffold for the assembly of a functional preinitiation complex with RNA polymerase II and the general transcription factors. The chain is Mediator of RNA polymerase II transcription subunit 17 (SRB4) from Candida glabrata (strain ATCC 2001 / BCRC 20586 / JCM 3761 / NBRC 0622 / NRRL Y-65 / CBS 138) (Yeast).